A 126-amino-acid chain; its full sequence is DNA-directed RNA polymerase subunit omega (126 aa).

This sequence belongs to the RNA polymerase subunit omega family. As to quaternary structure, the RNAP catalytic core consists of 2 alpha, 1 beta, 1 beta' and 1 omega subunit. When a sigma factor is associated with the core the holoenzyme is formed, which can initiate transcription.

The catalysed reaction is RNA(n) + a ribonucleoside 5'-triphosphate = RNA(n+1) + diphosphate. Functionally, promotes RNA polymerase assembly. Latches the N- and C-terminal regions of the beta' subunit thereby facilitating its interaction with the beta and alpha subunits. This Rickettsia felis (strain ATCC VR-1525 / URRWXCal2) (Rickettsia azadi) protein is DNA-directed RNA polymerase subunit omega.